Reading from the N-terminus, the 261-residue chain is MNDEESHISVLPVMNKQTSLVLQNLKEETENQLKELEKKRSQLHKEEQINLQLVYAINDLRSKTKELKAENEKEDTFLNSFNASGDLTANKKIQLREQSRKLEESLLSYHKKVKEMEKQHRSASSKLELAKLSAQQLQTNVNVLRSQNNPEILQDMISETKDCRSLIAEQLLQSASLLNDFQNDSDRIAKNHSSLIDTSRAHRVSLTNATKNYTHIFDSLLTFTRHDSEDVSTSVEKLTSKKISELEKLFADYCSIEDAFD.

A coiled-coil region spans residues 16–147; that stretch reads KQTSLVLQNL…QTNVNVLRSQ (132 aa).

The protein localises to the cytoplasm. This is an uncharacterized protein from Schizosaccharomyces pombe (strain 972 / ATCC 24843) (Fission yeast).